The sequence spans 465 residues: Endo-1,3-1,4-beta-glycanase ExsH (465 aa).

Hemolysin-type calcium-binding repeat units follow at residues 33–50 (HGTA…VNVT), 105–122 (FGNE…TQTI), and 123–140 (DGRG…ADTF). In terms of domain architecture, GH16 spans 206-462 (AHQFRLSLDR…YIKAYSLDAD (257 aa)). Residue Glu349 is the Nucleophile of the active site. Catalysis depends on Glu354, which acts as the Proton donor.

This sequence belongs to the glycosyl hydrolase 16 family.

Its subcellular location is the secreted. It participates in glycan metabolism; exopolysaccharide biosynthesis. In terms of biological role, cleaves high molecular weight succinoglycan to yield LMW succinoglycan. Dynamically regulates the molecular weight distribution of succinoglycan by cleaving nascent succinoglycan only during a limited period after its synthesis, perhaps before it undergoes a time-dependent change in its conformation or aggregation state. This Rhizobium meliloti (strain 1021) (Ensifer meliloti) protein is Endo-1,3-1,4-beta-glycanase ExsH (exsH).